The primary structure comprises 126 residues: Histone H2B type 2-B (126 aa).

Positions 1 to 12 (MPDPAKSAPAPK) are enriched in low complexity. Positions 1-36 (MPDPAKSAPAPKKGSKKAVTKVQKKDGKKRKRSRKE) are disordered. P2 bears the N-acetylproline mark. Position 6 is an N6-(2-hydroxyisobutyryl)lysine; alternate (K6). K6 bears the N6-(beta-hydroxybutyryl)lysine; alternate mark. K6 is modified (N6-acetyllysine; alternate). An N6-butyryllysine; alternate modification is found at K6. Residue K6 is modified to N6-crotonyllysine; alternate. N6-lactoyllysine; alternate is present on K6. K6 participates in a covalent cross-link: Glycyl lysine isopeptide (Lys-Gly) (interchain with G-Cter in SUMO2); alternate. S7 is modified (ADP-ribosylserine). Position 12 is an N6-(beta-hydroxybutyryl)lysine; alternate (K12). N6-acetyllysine; alternate occurs at positions 12 and 13. An N6-crotonyllysine; alternate mark is found at K12 and K13. An N6-lactoyllysine; alternate modification is found at K12. Residue K13 is modified to N6-(2-hydroxyisobutyryl)lysine; alternate. A Phosphoserine; by STK4/MST1 modification is found at S15. K16, K17, K21, and K24 each carry N6-acetyllysine; alternate. N6-crotonyllysine; alternate occurs at positions 16, 17, 21, and 24. N6-lactoyllysine; alternate is present on residues K16, K17, K21, and K24. K17 is subject to N6-glutaryllysine; alternate. An N6-(2-hydroxyisobutyryl)lysine; alternate mark is found at K21 and K24. N6-(beta-hydroxybutyryl)lysine; alternate is present on K21. At K21 the chain carries N6-butyryllysine; alternate. K21 participates in a covalent cross-link: Glycyl lysine isopeptide (Lys-Gly) (interchain with G-Cter in SUMO2); alternate. K25 bears the N6-(2-hydroxyisobutyryl)lysine mark. Residue K35 is modified to N6-(2-hydroxyisobutyryl)lysine; alternate. K35 is modified (N6-(beta-hydroxybutyryl)lysine; alternate). At K35 the chain carries N6-crotonyllysine; alternate. At K35 the chain carries N6-glutaryllysine; alternate. K35 carries the N6-succinyllysine; alternate modification. A Glycyl lysine isopeptide (Lys-Gly) (interchain with G-Cter in ubiquitin); alternate cross-link involves residue K35. E36 carries the post-translational modification PolyADP-ribosyl glutamic acid. S37 carries the post-translational modification Phosphoserine; by AMPK. K44, K47, and K58 each carry N6-(2-hydroxyisobutyryl)lysine; alternate. K44 carries the N6-lactoyllysine; alternate modification. An N6-glutaryllysine; alternate mark is found at K44 and K47. N6-methyllysine; alternate is present on K47. N6,N6-dimethyllysine; alternate is present on K58. A Dimethylated arginine modification is found at R80. At K86 the chain carries N6-(2-hydroxyisobutyryl)lysine; alternate. Position 86 is an N6-acetyllysine; alternate (K86). K86 carries the N6-lactoyllysine; alternate modification. At K86 the chain carries N6,N6,N6-trimethyllysine; alternate. Omega-N-methylarginine occurs at positions 87 and 93. K109 carries the post-translational modification N6-(2-hydroxyisobutyryl)lysine; alternate. N6-(beta-hydroxybutyryl)lysine; alternate is present on K109. K109 bears the N6-lactoyllysine; alternate mark. At K109 the chain carries N6-glutaryllysine; alternate. Residue K109 is modified to N6-methyllysine; alternate. An O-linked (GlcNAc) serine glycan is attached at S113. The residue at position 116 (T116) is a Phosphothreonine. N6-(2-hydroxyisobutyryl)lysine; alternate is present on residues K117 and K121. K117 carries the post-translational modification N6-(beta-hydroxybutyryl)lysine; alternate. N6-lactoyllysine; alternate occurs at positions 117 and 121. Residues K117 and K121 each carry the N6-glutaryllysine; alternate modification. K117 and K121 each carry N6-succinyllysine; alternate. K117 carries the post-translational modification N6-methylated lysine; alternate. K121 is covalently cross-linked (Glycyl lysine isopeptide (Lys-Gly) (interchain with G-Cter in ubiquitin); alternate).

This sequence belongs to the histone H2B family. The nucleosome is a histone octamer containing two molecules each of H2A, H2B, H3 and H4 assembled in one H3-H4 heterotetramer and two H2A-H2B heterodimers. The octamer wraps approximately 147 bp of DNA. Post-translationally, monoubiquitination at Lys-35 (H2BK34Ub) by the MSL1/MSL2 dimer is required for histone H3 'Lys-4' (H3K4me) and 'Lys-79' (H3K79me) methylation and transcription activation at specific gene loci, such as HOXA9 and MEIS1 loci. Similarly, monoubiquitination at Lys-121 (H2BK120Ub) by the RNF20/40 complex gives a specific tag for epigenetic transcriptional activation and is also prerequisite for histone H3 'Lys-4' and 'Lys-79' methylation. It also functions cooperatively with the FACT dimer to stimulate elongation by RNA polymerase II. H2BK120Ub also acts as a regulator of mRNA splicing: deubiquitination by USP49 is required for efficient cotranscriptional splicing of a large set of exons. In terms of processing, phosphorylated on Ser-15 (H2BS14ph) by STK4/MST1 during apoptosis; which facilitates apoptotic chromatin condensation. Also phosphorylated on Ser-15 in response to DNA double strand breaks (DSBs), and in correlation with somatic hypermutation and immunoglobulin class-switch recombination. Phosphorylation at Ser-37 (H2BS36ph) by AMPK in response to stress promotes transcription. GlcNAcylation at Ser-113 promotes monoubiquitination of Lys-121. It fluctuates in response to extracellular glucose, and associates with transcribed genes. Post-translationally, ADP-ribosylated by PARP1 or PARP2 on Ser-7 (H2BS6ADPr) in response to DNA damage. H2BS6ADPr promotes recruitment of CHD1L. Poly ADP-ribosylation on Glu-36 (H2BE35ADPr) by PARP1 regulates adipogenesis: it inhibits phosphorylation at Ser-37 (H2BS36ph), thereby blocking expression of pro-adipogenetic genes. In terms of processing, crotonylation (Kcr) is specifically present in male germ cells and marks testis-specific genes in post-meiotic cells, including X-linked genes that escape sex chromosome inactivation in haploid cells. Crotonylation marks active promoters and enhancers and confers resistance to transcriptional repressors. It is also associated with post-meiotically activated genes on autosomes. Hydroxybutyrylation of histones is induced by starvation. Post-translationally, lactylated in macrophages by EP300/P300 by using lactoyl-CoA directly derived from endogenous or exogenous lactate, leading to stimulates gene transcription.

The protein localises to the nucleus. Its subcellular location is the chromosome. In terms of biological role, core component of nucleosome. Nucleosomes wrap and compact DNA into chromatin, limiting DNA accessibility to the cellular machineries which require DNA as a template. Histones thereby play a central role in transcription regulation, DNA repair, DNA replication and chromosomal stability. DNA accessibility is regulated via a complex set of post-translational modifications of histones, also called histone code, and nucleosome remodeling. The chain is Histone H2B type 2-B from Mus musculus (Mouse).